The sequence spans 107 residues: UPF0145 protein BVU_2335 (107 aa).

This sequence belongs to the UPF0145 family.

The chain is UPF0145 protein BVU_2335 from Phocaeicola vulgatus (strain ATCC 8482 / DSM 1447 / JCM 5826 / CCUG 4940 / NBRC 14291 / NCTC 11154) (Bacteroides vulgatus).